Reading from the N-terminus, the 99-residue chain is MKSIDPRHYDVIVAPVVTEKSTMASEHNKVVFKVQGGATKPQIKEAVEKLFDVKVKSVNTLVRKGKTKAFRGTFGTQSDVKRAVVTLEEGHRIDVTTGL.

Contacts protein L29, and trigger factor when it is bound to the ribosome. Part of the 50S ribosomal subunit.

Functionally, one of the early assembly proteins it binds 23S rRNA. One of the proteins that surrounds the polypeptide exit tunnel on the outside of the ribosome. Forms the main docking site for trigger factor binding to the ribosome. In Rhodopseudomonas palustris (strain ATCC BAA-98 / CGA009), this protein is Large ribosomal subunit protein uL23.